Here is a 209-residue protein sequence, read N- to C-terminus: Uracil phosphoribosyltransferase (209 aa).

5-phospho-alpha-D-ribose 1-diphosphate-binding positions include Arg79, Arg104, and 131–139 (DPMLATGGS). Residues Ile194 and 199 to 201 (GDA) contribute to the uracil site. Asp200 contacts 5-phospho-alpha-D-ribose 1-diphosphate.

Belongs to the UPRTase family. It depends on Mg(2+) as a cofactor.

The catalysed reaction is UMP + diphosphate = 5-phospho-alpha-D-ribose 1-diphosphate + uracil. It functions in the pathway pyrimidine metabolism; UMP biosynthesis via salvage pathway; UMP from uracil: step 1/1. Its activity is regulated as follows. Allosterically activated by GTP. Catalyzes the conversion of uracil and 5-phospho-alpha-D-ribose 1-diphosphate (PRPP) to UMP and diphosphate. The protein is Uracil phosphoribosyltransferase of Macrococcus caseolyticus (strain JCSC5402) (Macrococcoides caseolyticum).